Reading from the N-terminus, the 475-residue chain is Ribulose bisphosphate carboxylase large chain (475 aa).

Positions 1–2 are excised as a propeptide; it reads MS. An N-acetylproline modification is found at proline 3. An N6,N6,N6-trimethyllysine modification is found at lysine 14. Substrate contacts are provided by asparagine 123 and threonine 173. The active-site Proton acceptor is lysine 175. Lysine 177 serves as a coordination point for substrate. Positions 201, 203, and 204 each coordinate Mg(2+). Position 201 is an N6-carboxylysine (lysine 201). Histidine 294 functions as the Proton acceptor in the catalytic mechanism. 3 residues coordinate substrate: arginine 295, histidine 327, and serine 379.

The protein belongs to the RuBisCO large chain family. Type I subfamily. In terms of assembly, heterohexadecamer of 8 large chains and 8 small chains; disulfide-linked. The disulfide link is formed within the large subunit homodimers. It depends on Mg(2+) as a cofactor. Post-translationally, the disulfide bond which can form in the large chain dimeric partners within the hexadecamer appears to be associated with oxidative stress and protein turnover.

It localises to the plastid. The protein resides in the chloroplast. The catalysed reaction is 2 (2R)-3-phosphoglycerate + 2 H(+) = D-ribulose 1,5-bisphosphate + CO2 + H2O. It carries out the reaction D-ribulose 1,5-bisphosphate + O2 = 2-phosphoglycolate + (2R)-3-phosphoglycerate + 2 H(+). Its function is as follows. RuBisCO catalyzes two reactions: the carboxylation of D-ribulose 1,5-bisphosphate, the primary event in carbon dioxide fixation, as well as the oxidative fragmentation of the pentose substrate in the photorespiration process. Both reactions occur simultaneously and in competition at the same active site. This Viscum album (European mistletoe) protein is Ribulose bisphosphate carboxylase large chain.